A 377-amino-acid polypeptide reads, in one-letter code: Succinyl-diaminopimelate desuccinylase (377 aa).

His-68 serves as a coordination point for Zn(2+). Asp-70 is an active-site residue. Asp-101 lines the Zn(2+) pocket. Catalysis depends on Glu-135, which acts as the Proton acceptor. 3 residues coordinate Zn(2+): Glu-136, Glu-164, and His-350.

The protein belongs to the peptidase M20A family. DapE subfamily. In terms of assembly, homodimer. The cofactor is Zn(2+). Co(2+) is required as a cofactor.

It catalyses the reaction N-succinyl-(2S,6S)-2,6-diaminopimelate + H2O = (2S,6S)-2,6-diaminopimelate + succinate. It participates in amino-acid biosynthesis; L-lysine biosynthesis via DAP pathway; LL-2,6-diaminopimelate from (S)-tetrahydrodipicolinate (succinylase route): step 3/3. In terms of biological role, catalyzes the hydrolysis of N-succinyl-L,L-diaminopimelic acid (SDAP), forming succinate and LL-2,6-diaminopimelate (DAP), an intermediate involved in the bacterial biosynthesis of lysine and meso-diaminopimelic acid, an essential component of bacterial cell walls. In Aliivibrio fischeri (strain MJ11) (Vibrio fischeri), this protein is Succinyl-diaminopimelate desuccinylase.